The chain runs to 409 residues: E3 ubiquitin-protein ligase MARCHF4 (409 aa).

The N-terminal stretch at 1 to 17 (MLMPLGGLLWWWCCCCG) is a signal peptide. Positions 92–133 (GPREAVGRETPPLPPPPPLPPSGDDDWDGPATGPPASLLSSA) are disordered. The span at 102–112 (PPLPPPPPLPP) shows a compositional bias: pro residues. An RING-CH-type zinc finger spans residues 154-214 (DSGMRTPLCR…ELCYYKYHVI (61 aa)). 8 residues coordinate Zn(2+): Cys162, Cys165, Cys178, Cys180, His188, Cys191, Cys204, and Cys207. A run of 2 helical transmembrane segments spans residues 242–262 (LGSL…FSPS) and 271–291 (LFQI…GLII). Disordered regions lie at residues 323 to 372 (EDQK…GPVS) and 389 to 409 (PHDQ…VTTV). The span at 328–343 (GGRTNLQTSSSAQANL) shows a compositional bias: polar residues.

The protein resides in the golgi apparatus membrane. The enzyme catalyses S-ubiquitinyl-[E2 ubiquitin-conjugating enzyme]-L-cysteine + [acceptor protein]-L-lysine = [E2 ubiquitin-conjugating enzyme]-L-cysteine + N(6)-ubiquitinyl-[acceptor protein]-L-lysine.. The protein operates within protein modification; protein ubiquitination. Functionally, E3 ubiquitin-protein ligase that may mediate ubiquitination of MHC-I and CD4, and promote their subsequent endocytosis and sorting to lysosomes via multivesicular bodies. E3 ubiquitin ligases accept ubiquitin from an E2 ubiquitin-conjugating enzyme in the form of a thioester and then directly transfer the ubiquitin to targeted substrates. The protein is E3 ubiquitin-protein ligase MARCHF4 (Marchf4) of Mus musculus (Mouse).